The primary structure comprises 30 residues: Alpha-conotoxin EIVA (30 aa).

Cystine bridges form between C2–C16, C3–C11, and C14–C24. 5 positions are modified to 4-hydroxyproline: P7, P13, P21, P22, and P27. Glycine amide is present on G30.

In terms of tissue distribution, expressed by the venom duct.

It localises to the secreted. Its function is as follows. Alpha-conotoxins act on postsynaptic membranes, they bind to the nicotinic acetylcholine receptors (nAChR) and thus inhibit them. This toxin binds with high affinity to both fetal (alpha-1-beta-1-epsilon-delta (CHRNA1-CHRNB1-CHRND-CHRNE) subunits) and adult (alpha-1/beta-1/gamma/delta subunits) mammalian muscle nicotinic acetylcholine receptors (nAChR). This is Alpha-conotoxin EIVA from Conus ermineus (Agate cone).